Here is a 1070-residue protein sequence, read N- to C-terminus: Duffy receptor (1070 aa).

Residues 1 to 20 (MKGKNRSLFVLLVLLLLHKV) form the signal peptide. Topologically, residues 21–1007 (NNVLLERTIE…CFTKGGFKDK (987 aa)) are extracellular. Positions 116-146 (YMEGKDGGDKTGEEKDGEHKTDSKTDNGKGA) are disordered. Residues 118–142 (EGKDGGDKTGEEKDGEHKTDSKTDN) show a composition bias toward basic and acidic residues. An N-linked (GlcNAc...) asparagine glycan is attached at N183. The tract at residues 211-521 (NTVMKNCNYK…AKKNTQEVVT (311 aa)) is pvRII region; mediates ACKR1 binding. Intrachain disulfides connect C217/C246 and C230/C237. N255, N351, and N420 each carry an N-linked (GlcNAc...) asparagine glycan. Cystine bridges form between C300–C377, C415–C432, C427–C507, and C436–C505. Composition is skewed to polar residues over residues 525–542 (NAAKSQATNSNPISQPVD), 554–569 (THGNVNSGQDSSTTGK), and 629–642 (GASNSRPSESTVEA). The tract at residues 525 to 906 (NAAKSQATNS…HLNSNNNLSN (382 aa)) is disordered. Residues 697 to 711 (ETGKGQDNDMAKATK) are compositionally biased toward basic and acidic residues. A compositionally biased stretch (low complexity) spans 712-728 (DSSNSSDGTSSATGDTT). N-linked (GlcNAc...) asparagine glycosylation is present at N715. Positions 730-748 (AVDREINKGVPEDRDKTVG) are enriched in basic and acidic residues. Residue N787 is glycosylated (N-linked (GlcNAc...) asparagine). Residues 808-817 (LSKTESLEST) show a composition bias toward low complexity. A glycan (N-linked (GlcNAc...) asparagine) is linked at N825. Basic and acidic residues-rich tracts occupy residues 835 to 849 (NGGKEKDLQKHDFKS) and 865 to 889 (AEGHDRDSIKNDKAERRKHMNKDTF). Low complexity predominate over residues 895-906 (SHHLNSNNNLSN). 2 N-linked (GlcNAc...) asparagine glycosylation sites follow: N903 and N938. The helical transmembrane segment at 1008–1025 (TYFAAAGALLILLLLIAS) threads the bilayer. The Cytoplasmic segment spans residues 1026-1070 (RKMIKNDSEEATFNEFEEYCDNIHRIPLMPNNIEHMQPSTPLDYS).

As to quaternary structure, homodimer; dimerization (via PvRII region) is promoted by the interaction with human ACKR1. Interacts (via PvRII region) with human ACKR1 (via N-terminal extracellular domain).

The protein resides in the membrane. Its function is as follows. Binds to the human erythrocyte Duffy blood group determinant (ACKR1). This is Duffy receptor (PVDR) from Plasmodium vivax (strain Salvador I).